The primary structure comprises 258 residues: Snake venom serine protease CL2 (258 aa).

A signal peptide spans 1–18 (MVLIRVLANLLIIQLSYA). The propeptide occupies 19–24 (QKSSEL). One can recognise a Peptidase S1 domain in the interval 25–249 (VIGGDECNIN…YTDWIKSIIA (225 aa)). Disulfide bonds link C31–C163, C50–C66, C98–C256, C142–C210, C174–C189, and C200–C225. N-linked (GlcNAc...) asparagine glycosylation is present at N44. H65 acts as the Charge relay system in catalysis. N103 carries N-linked (GlcNAc...) asparagine glycosylation. Catalysis depends on D110, which acts as the Charge relay system. N-linked (GlcNAc...) asparagine glycosylation is present at N121. S204 (charge relay system) is an active-site residue. N-linked (GlcNAc...) asparagine glycosylation is present at N251.

This sequence belongs to the peptidase S1 family. Snake venom subfamily. Monomer. Expressed by the venom gland.

It is found in the secreted. Functionally, snake venom serine protease that may act in the hemostasis system of the prey. The protein is Snake venom serine protease CL2 of Trimeresurus stejnegeri (Chinese green tree viper).